The following is a 286-amino-acid chain: 33 kDa chaperonin (286 aa).

2 cysteine pairs are disulfide-bonded: Cys-225–Cys-227 and Cys-258–Cys-261.

This sequence belongs to the HSP33 family. Under oxidizing conditions two disulfide bonds are formed involving the reactive cysteines. Under reducing conditions zinc is bound to the reactive cysteines and the protein is inactive.

Its subcellular location is the cytoplasm. Redox regulated molecular chaperone. Protects both thermally unfolding and oxidatively damaged proteins from irreversible aggregation. Plays an important role in the bacterial defense system toward oxidative stress. In Shewanella sp. (strain MR-4), this protein is 33 kDa chaperonin.